The sequence spans 459 residues: Biphenyl dioxygenase subunit alpha (459 aa).

One can recognise a Rieske domain in the interval 58–156; sequence WLLLGHESHV…KEGDCGFDKA (99 aa). [2Fe-2S] cluster-binding residues include Cys-100, His-102, Cys-120, and His-123. Positions 233 and 239 each coordinate Fe cation.

This sequence belongs to the bacterial ring-hydroxylating dioxygenase alpha subunit family. As to quaternary structure, heterohexamer consisting of three BphA subunits and three BphE subunits. A ferredoxin (BphF) and a ferredoxin reductase (BphG) must be present to obtain activity. [2Fe-2S] cluster serves as cofactor. Requires Fe cation as cofactor.

The catalysed reaction is biphenyl + NADH + O2 + H(+) = (2R,3S)-3-phenylcyclohexa-3,5-diene-1,2-diol + NAD(+). Its pathway is xenobiotic degradation; biphenyl degradation; 2-hydroxy-2,4-pentadienoate and benzoate from biphenyl: step 1/4. This chain is Biphenyl dioxygenase subunit alpha (bphA), found in Paraburkholderia xenovorans (strain LB400).